We begin with the raw amino-acid sequence, 256 residues long: Endonuclease NucS (256 aa).

A disordered region spans residues 62 to 97 (AAKSAQHSRESVAGGAVDGDSATHSPESVAAGEPEK).

The protein belongs to the NucS endonuclease family.

The protein localises to the cytoplasm. Cleaves both 3' and 5' ssDNA extremities of branched DNA structures. The polypeptide is Endonuclease NucS (Bifidobacterium longum (strain NCC 2705)).